The sequence spans 177 residues: Anditomin synthesis protein L (177 aa).

2 helical membrane-spanning segments follow: residues 54–74 (VVNS…PFIM) and 117–137 (IVNF…YMVF). A glycan (N-linked (GlcNAc...) asparagine) is linked at N165.

It is found in the membrane. It participates in secondary metabolite biosynthesis; terpenoid biosynthesis. Part of the gene cluster that mediates the biosynthesis of anditomin, a fungal meroterpenoid. The first step of the pathway is the synthesis of 3,5-dimethylorsellinic acid (DMOA) by the polyketide synthase andM. DMOA is then converted to the phthalide compound 5,7-dihydroxy-4,6-dimethylphthalide (DHDMP) by the cytochrome P450 monooxygenase andK, which is further prenylated by the prenyltransferase andD to yield farnesyl-DHDMP. Further epoxidation by the FAD-dependent monooxygenase andE leads to epoxyfarnesyl-DHDMP. The next step involves the terpene cyclase andB that converts epoxyfarnesyl-DHDMP into preandiloid A through opening of the epoxide ring followed by the cyclization of the farnesyl moiety. Preandiloid A is in turn oxidized at the C-3 hydroxyl group to yield preandiloid B by the dehydrogenase andC. The dioxygenase andA is solely responsible for the dehydrogenation of preandiloid B leading to the enone preandiloid C, as well as for the intriguing structural rearrangement to generate the bicyclo[2.2.2]octane core, transforming preandiloid C into andiconin. FAD-binding monooxygenase andJ then produces andilesin D which is reduced by dehydrogenase andI to yield andilesin A. Action of acetyltransferase andG followed by a spontaneous acetate elimination leads then to andilesin B, which is in turn substrate of the short chain dehydrogenase andH to yield andilesin C. Finally, the dioxygenase andF catalyzes the transformation of andilesin C to anditomin. The exact role of andL within the anditomin biosynthetic pathway has not been identified yet. In Emericella variicolor (Aspergillus stellatus), this protein is Anditomin synthesis protein L.